We begin with the raw amino-acid sequence, 29 residues long: Small toxic protein ZorP (29 aa).

The chain crosses the membrane as a helical span at residues 10–27 (VLIAVLELLVALLRLIDL).

It is found in the membrane. Functionally, toxic component of a type I toxin-antitoxin (TA) system. Overexpression leads to cell stasis and a decrease in colony-forming units. Probably repressed by cognate small RNA orzP. Base pairing occurs between 18 bases in the 5' UTR of zorP mRNA and the 5' end of OrzP sRNA. The polypeptide is Small toxic protein ZorP (Escherichia coli O157:H7).